The sequence spans 369 residues: uncharacterized protein (369 aa).

Transmembrane regions (helical) follow at residues 25–45, 47–67, 119–139, 152–172, 206–226, 235–255, 268–288, 295–315, and 323–343; these read QWVI…TVHW, FGLL…LMPE, LNIV…FGVM, ITGF…FSAL, GALH…LFAI, LQAV…TLHL, LLFT…LPLI, LVGF…TTVF, and WVFY…GTVF.

The protein to B.subtilis ComEC.

It localises to the cell membrane. This is an uncharacterized protein from Mycoplasma pneumoniae (strain ATCC 29342 / M129 / Subtype 1) (Mycoplasmoides pneumoniae).